We begin with the raw amino-acid sequence, 88 residues long: UPF0298 protein BcerKBAB4_3759 (88 aa).

It belongs to the UPF0298 family.

The protein localises to the cytoplasm. The sequence is that of UPF0298 protein BcerKBAB4_3759 from Bacillus mycoides (strain KBAB4) (Bacillus weihenstephanensis).